A 706-amino-acid chain; its full sequence is Probable cyclic nucleotide-gated ion channel 3 (706 aa).

The Cytoplasmic portion of the chain corresponds to 1 to 85 (MMNPQRNKFV…NDSYLQSWNK (85 aa)). The chain crosses the membrane as a helical span at residues 86 to 106 (IFLLLSVVALAFDPLFFYIPY). The Extracellular segment spans residues 107-119 (VKPERFCLNLDKK). Residues 120 to 140 (LQTIACVFRTFIDAFYVVHML) form a helical membrane-spanning segment. Residues 141–174 (FQFHTGFITPSSSGFGRGELNEKHKDIALRYLGS) lie on the Cytoplasmic side of the membrane. The chain crosses the membrane as a helical span at residues 175–195 (YFLIDLLSILPIPQVVVLAIV). Residues 196–208 (PRMRRPASLVAKE) are Extracellular-facing. Residues 209-229 (LLKWVIFCQYVPRIARIYPLF) form a helical membrane-spanning segment. Residues 230 to 247 (KEVTRTSGLVTETAWAGA) are Cytoplasmic-facing. The chain crosses the membrane as a helical span at residues 248 to 268 (ALNLFLYMLASHVFGSFWYLI). Topologically, residues 269–371 (SIERKDRCWR…QNLKTSAFEG (103 aa)) are extracellular. The chain crosses the membrane as a helical span at residues 372 to 392 (EIIFAIVICISGLVLFALLIG). Topologically, residues 393–706 (NMQKYLQSTT…ADPEFPMDET (314 aa)) are cytoplasmic. Residues 477–600 (WFQA…KQLR) and Asp-548 each bind a nucleoside 3',5'-cyclic phosphate. The tract at residues 591 to 606 (YRRLHSKQLRHMFRFY) is calmodulin-binding. The 30-residue stretch at 611–640 (QTWAACFIQAAWKRHCRRKLSKALREEEGK) folds into the IQ domain.

Belongs to the cyclic nucleotide-gated cation channel (TC 1.A.1.5) family. As to quaternary structure, homotetramer or heterotetramer.

Its subcellular location is the cell membrane. Its function is as follows. Probable cyclic nucleotide-gated ion channel. This chain is Probable cyclic nucleotide-gated ion channel 3 (CNGC3), found in Arabidopsis thaliana (Mouse-ear cress).